The chain runs to 188 residues: Elongation factor P-like protein (188 aa).

It belongs to the elongation factor P family.

The chain is Elongation factor P-like protein from Alcanivorax borkumensis (strain ATCC 700651 / DSM 11573 / NCIMB 13689 / SK2).